The sequence spans 250 residues: Probable chemoreceptor glutamine deamidase CheD (250 aa).

Belongs to the CheD family.

The enzyme catalyses L-glutaminyl-[protein] + H2O = L-glutamyl-[protein] + NH4(+). Probably deamidates glutamine residues to glutamate on methyl-accepting chemotaxis receptors (MCPs), playing an important role in chemotaxis. The sequence is that of Probable chemoreceptor glutamine deamidase CheD from Paraburkholderia xenovorans (strain LB400).